A 107-amino-acid polypeptide reads, in one-letter code: Large ribosomal subunit protein uL24 (107 aa).

The protein belongs to the universal ribosomal protein uL24 family. In terms of assembly, part of the 50S ribosomal subunit.

Functionally, one of two assembly initiator proteins, it binds directly to the 5'-end of the 23S rRNA, where it nucleates assembly of the 50S subunit. One of the proteins that surrounds the polypeptide exit tunnel on the outside of the subunit. In Carboxydothermus hydrogenoformans (strain ATCC BAA-161 / DSM 6008 / Z-2901), this protein is Large ribosomal subunit protein uL24.